The sequence spans 163 residues: Probable phosphotransferase enzyme IIB component M6_Spy0801 (163 aa).

Positions 1–163 (MITQIRVDDR…TKVHLSQLVN (163 aa)) constitute a PTS EIIB type-4 domain. The Pros-phosphohistidine intermediate role is filled by H13.

The protein localises to the cytoplasm. In terms of biological role, the phosphoenolpyruvate-dependent sugar phosphotransferase system (sugar PTS), a major carbohydrate active -transport system, catalyzes the phosphorylation of incoming sugar substrates concomitantly with their translocation across the cell membrane. This is Probable phosphotransferase enzyme IIB component M6_Spy0801 from Streptococcus pyogenes serotype M6 (strain ATCC BAA-946 / MGAS10394).